Consider the following 1221-residue polypeptide: DNA-directed RNA polymerase subunit beta (1221 aa).

Residues 1176-1221 (EKKKLAEEEAEIAAEAEAEGSAEGDAAEADADANEAETADDDKASK) are disordered. The span at 1183–1215 (EEAEIAAEAEAEGSAEGDAAEADADANEAETAD) shows a compositional bias: acidic residues.

Belongs to the RNA polymerase beta chain family. In terms of assembly, the RNAP catalytic core consists of 2 alpha, 1 beta, 1 beta' and 1 omega subunit. When a sigma factor is associated with the core the holoenzyme is formed, which can initiate transcription.

The catalysed reaction is RNA(n) + a ribonucleoside 5'-triphosphate = RNA(n+1) + diphosphate. DNA-dependent RNA polymerase catalyzes the transcription of DNA into RNA using the four ribonucleoside triphosphates as substrates. In Lactobacillus delbrueckii subsp. bulgaricus (strain ATCC 11842 / DSM 20081 / BCRC 10696 / JCM 1002 / NBRC 13953 / NCIMB 11778 / NCTC 12712 / WDCM 00102 / Lb 14), this protein is DNA-directed RNA polymerase subunit beta.